A 526-amino-acid polypeptide reads, in one-letter code: ATP-dependent RNA helicase dbp8 (526 aa).

The tract at residues 1 to 77 (MTSPVPSEPV…DAKPAAPAGQ (77 aa)) is disordered. The span at 17 to 31 (SSSGSEVEPSKTSTR) shows a compositional bias: polar residues. Positions 96–124 (SSFAALNVAPWLVGSLTTMAVRKPTAIQK) match the Q motif motif. The Helicase ATP-binding domain occupies 127–306 (IPEILKGRDC…NMPRSANKPP (180 aa)). An ATP-binding site is contributed by 140 to 147 (SRTGSGKT). Residues 249–252 (DEAD) carry the DEAD box motif. One can recognise a Helicase C-terminal domain in the interval 338–485 (AFLHVLLSTE…EWSEEGVSIE (148 aa)).

It belongs to the DEAD box helicase family. DDX49/DBP8 subfamily.

The protein localises to the nucleus. It localises to the nucleolus. The catalysed reaction is ATP + H2O = ADP + phosphate + H(+). Its function is as follows. ATP-binding RNA helicase involved in 40S ribosomal subunit biogenesis and is required for the normal formation of 18S rRNAs through pre-rRNA processing at A0, A1 and A2 sites. Required for vegetative growth. The chain is ATP-dependent RNA helicase dbp8 (dbp8) from Aspergillus fumigatus (strain ATCC MYA-4609 / CBS 101355 / FGSC A1100 / Af293) (Neosartorya fumigata).